Reading from the N-terminus, the 318-residue chain is 2-keto-3-deoxygluconate permease (318 aa).

Transmembrane regions (helical) follow at residues Ile10–Pro30, Gly42–Ile62, Val76–Leu96, Leu105–Leu125, Ala139–Gly159, Gly162–Phe182, Val199–Ile219, Phe224–Ala244, Ala263–Val283, and Ala289–Trp309.

The protein belongs to the KdgT transporter family.

The protein localises to the cell inner membrane. It catalyses the reaction 2-dehydro-3-deoxy-D-gluconate(in) + H(+)(in) = 2-dehydro-3-deoxy-D-gluconate(out) + H(+)(out). Functionally, catalyzes the proton-dependent uptake of 2-keto-3-deoxygluconate (KDG) into the cell. The polypeptide is 2-keto-3-deoxygluconate permease (Pectobacterium carotovorum subsp. carotovorum (strain PC1)).